A 151-amino-acid polypeptide reads, in one-letter code: 3-hydroxyacyl-[acyl-carrier-protein] dehydratase FabZ (151 aa).

Residue histidine 54 is part of the active site.

It belongs to the thioester dehydratase family. FabZ subfamily.

It localises to the cytoplasm. The enzyme catalyses a (3R)-hydroxyacyl-[ACP] = a (2E)-enoyl-[ACP] + H2O. Functionally, involved in unsaturated fatty acids biosynthesis. Catalyzes the dehydration of short chain beta-hydroxyacyl-ACPs and long chain saturated and unsaturated beta-hydroxyacyl-ACPs. The sequence is that of 3-hydroxyacyl-[acyl-carrier-protein] dehydratase FabZ from Pectobacterium atrosepticum (strain SCRI 1043 / ATCC BAA-672) (Erwinia carotovora subsp. atroseptica).